Here is a 188-residue protein sequence, read N- to C-terminus: dTTP/UTP pyrophosphatase (188 aa).

Asp67 (proton acceptor) is an active-site residue.

Belongs to the Maf family. YhdE subfamily. Requires a divalent metal cation as cofactor.

Its subcellular location is the cytoplasm. The enzyme catalyses dTTP + H2O = dTMP + diphosphate + H(+). It carries out the reaction UTP + H2O = UMP + diphosphate + H(+). Nucleoside triphosphate pyrophosphatase that hydrolyzes dTTP and UTP. May have a dual role in cell division arrest and in preventing the incorporation of modified nucleotides into cellular nucleic acids. The chain is dTTP/UTP pyrophosphatase from Thermococcus kodakarensis (strain ATCC BAA-918 / JCM 12380 / KOD1) (Pyrococcus kodakaraensis (strain KOD1)).